The sequence spans 729 residues: Pentatricopeptide repeat-containing protein At5g01110 (729 aa).

The interval 26–45 (TSSSPVFEPSSSSSSSSSSA) is disordered. Over residues 27 to 45 (SSSPVFEPSSSSSSSSSSA) the composition is skewed to low complexity. PPR repeat units lie at residues 112 to 147 (TSLSLSAMIHILVRSGRLSDAQSCLLRMIRRSGVSR), 164 to 198 (NDSVFDLLIRTYVQARKLREAHEAFTLLRSKGFTV), 199 to 233 (SIDACNALIGSLVRIGWVELAWGVYQEISRSGVGI), 234 to 268 (NVYTLNIMVNALCKDGKMEKVGTFLSQVQEKGVYP), 269 to 303 (DIVTYNTLISAYSSKGLMEEAFELMNAMPGKGFSP), 304 to 338 (GVYTYNTVINGLCKHGKYERAKEVFAEMLRSGLSP), 339 to 373 (DSTTYRSLLMEACKKGDVVETEKVFSDMRSRDVVP), 374 to 408 (DLVCFSSMMSLFTRSGNLDKALMYFNSVKEAGLIP), 409 to 443 (DNVIYTILIQGYCRKGMISVAMNLRNEMLQQGCAM), 444 to 478 (DVVTYNTILHGLCKRKMLGEADKLFNEMTERALFP), 479 to 513 (DSYTLTILIDGHCKLGNLQNAMELFQKMKEKRIRL), 514 to 548 (DVVTYNTLLDGFGKVGDIDTAKEIWADMVSKEILP), 549 to 583 (TPISYSILVNALCSKGHLAEAFRVWDEMISKNIKP), 584 to 618 (TVMICNSMIKGYCRSGNASDGESFLEKMISEGFVP), 619 to 649 (DCISYNTLIYGFVREENMSKAFGLVKKMEEE), 656 to 690 (DVFTYNSILHGFCRQNQMKEAEVVLRKMIERGVNP), and 691 to 725 (DRSTYTCMINGFVSQDNLTEAFRIHDEMLQRGFSP).

Belongs to the PPR family. P subfamily.

The chain is Pentatricopeptide repeat-containing protein At5g01110 from Arabidopsis thaliana (Mouse-ear cress).